A 179-amino-acid chain; its full sequence is Large ribosomal subunit protein uL5 (179 aa).

It belongs to the universal ribosomal protein uL5 family. As to quaternary structure, part of the 50S ribosomal subunit; part of the 5S rRNA/L5/L18/L25 subcomplex. Contacts the 5S rRNA and the P site tRNA. Forms a bridge to the 30S subunit in the 70S ribosome.

Functionally, this is one of the proteins that bind and probably mediate the attachment of the 5S RNA into the large ribosomal subunit, where it forms part of the central protuberance. In the 70S ribosome it contacts protein S13 of the 30S subunit (bridge B1b), connecting the 2 subunits; this bridge is implicated in subunit movement. Contacts the P site tRNA; the 5S rRNA and some of its associated proteins might help stabilize positioning of ribosome-bound tRNAs. The polypeptide is Large ribosomal subunit protein uL5 (Synechococcus sp. (strain CC9311)).